The chain runs to 93 residues: uncharacterized protein (93 aa).

The protein to B.subtilis YdcN C-terminal region.

This is an uncharacterized protein from Methanocaldococcus jannaschii (strain ATCC 43067 / DSM 2661 / JAL-1 / JCM 10045 / NBRC 100440) (Methanococcus jannaschii).